A 3390-amino-acid chain; its full sequence is Genome polyprotein (3390 aa).

Positions 1 to 15 are interaction with host EXOC1; sequence MNNQRKKTGKPSINM. The Cytoplasmic portion of the chain corresponds to 1–100; the sequence is MNNQRKKTGK…MLSIINQRKK (100 aa). Residues 37–72 form a hydrophobic; homodimerization of capsid protein C region; the sequence is LLNGQGPMKLVMAFIAFLRFLAIPPTAGVLARWGTF. A propeptide spans 101-114 (ER anchor for the capsid protein C, removed in mature form by serine protease NS3); that stretch reads TSLCLMMILPAALA. A helical transmembrane segment spans residues 101–120; sequence TSLCLMMILPAALAFHLTSR. Residues 121 to 243 are Extracellular-facing; sequence DGEPRMIVGK…VEKVETWALR (123 aa). N-linked (GlcNAc...) asparagine; by host glycosylation is present at asparagine 183. Residues 244–264 traverse the membrane as a helical segment; that stretch reads HPGFTILALFLAHYIGTSLTQ. Lysine 265 is a topological domain (cytoplasmic). Residues 266-280 traverse the membrane as a helical segment; sequence VVIFILLMLVTPSMT. At 281-723 the chain is on the extracellular side; it reads MRCVGVGNRD…VHQIFGSAYT (443 aa). 4 disulfides stabilise this stretch: cysteine 283–cysteine 310, cysteine 340–cysteine 401, cysteine 354–cysteine 385, and cysteine 372–cysteine 396. Asparagine 347 is a glycosylation site (N-linked (GlcNAc...) asparagine; by host). Residues 378 to 391 form a fusion peptide region; it reads DRGWGNGCGLFGKG. A glycan (N-linked (GlcNAc...) asparagine; by host) is linked at asparagine 433. Cystine bridges form between cysteine 463–cysteine 563 and cysteine 580–cysteine 611. Residues 724–744 form a helical membrane-spanning segment; it reads ALFSGVSWVMKIGIGVLLTWI. Over 745–750 the chain is Cytoplasmic; sequence GLNSKN. The chain crosses the membrane as a helical span at residues 751–771; it reads TSMSFSCIAIGIITLYLGAVV. Topologically, residues 772–1193 are extracellular; it reads QADMGCVINW…MIGSNASDRM (422 aa). Intrachain disulfides connect cysteine 777/cysteine 788, cysteine 828/cysteine 916, cysteine 952/cysteine 996, cysteine 1053/cysteine 1102, cysteine 1064/cysteine 1086, and cysteine 1085/cysteine 1089. N-linked (GlcNAc...) asparagine; by host glycans are attached at residues asparagine 903 and asparagine 980. Residues asparagine 1132 and asparagine 1188 are each glycosylated (N-linked (GlcNAc...) asparagine; by host). The chain crosses the membrane as a helical span at residues 1194 to 1218; that stretch reads GMGVTYLALIATFKIQPFLALGFFL. The Cytoplasmic portion of the chain corresponds to 1219-1224; that stretch reads RKLTSR. The chain crosses the membrane as a helical span at residues 1225-1243; sequence ENLLLGVGLAMATTLQLPE. Residues 1244-1267 lie on the Lumenal side of the membrane; the sequence is DIEQMANGVALGLMALKLITQFET. Residues 1268–1288 traverse the membrane as a helical segment; sequence YQLWTALVSLTCSNTIFTLTV. Residue alanine 1289 is a topological domain, cytoplasmic. A helical transmembrane segment spans residues 1290-1308; the sequence is WRTATLILAGVSLLPVCQS. Topologically, residues 1309–1315 are lumenal; the sequence is SSMRKTD. The helical transmembrane segment at 1316 to 1336 threads the bilayer; sequence WLPMTVAAMGVPPLPLFIFSL. Residues 1337-1344 lie on the Cytoplasmic side of the membrane; the sequence is KDTLKRRS. A helical transmembrane segment spans residues 1345–1365; sequence WPLNEGVMAVGLVSILASSLL. Residues 1366–1368 are Lumenal-facing; that stretch reads RND. A helical transmembrane segment spans residues 1369-1389; sequence VPMAGPLVAGGLLIACYVITG. Topologically, residues 1390–1443 are cytoplasmic; sequence TSADLTVEKAPDVTWEEEAEQTGVSHNLMITVDDDGTMRIKDDETENILTVLLK. The interacts with and activates NS3 protease stretch occupies residues 1396-1435; sequence VEKAPDVTWEEEAEQTGVSHNLMITVDDDGTMRIKDDETE. The helical intramembrane region spans 1444–1464; the sequence is TALLIVSGIFPYSIPATLLVW. The Cytoplasmic portion of the chain corresponds to 1465-2146; sequence HTWQKQTQRS…VEELPETMET (682 aa). The region spanning 1474 to 1651 is the Peptidase S7 domain; that stretch reads SGVLWDVPSP…NAEPDGPTPE (178 aa). Active-site charge relay system; for serine protease NS3 activity residues include histidine 1524, aspartate 1548, and serine 1608. A Helicase ATP-binding domain is found at 1654–1810; that stretch reads EEMFKKRNLT…QSNAPIQDEE (157 aa). The interval 1658 to 1661 is important for RNA-binding; sequence KKRN. 1667–1674 serves as a coordination point for ATP; it reads LHPGSGKT. A DEAH box motif is present at residues 1758–1761; the sequence is DEAH. Residues 1820-1986 enclose the Helicase C-terminal domain; the sequence is SGNEWITDFA…GIIPALFEPE (167 aa). Position 1862 is an N6-acetyllysine; by host (lysine 1862). The helical transmembrane segment at 2147-2167 threads the bilayer; the sequence is LLLLGLMILLTGGAMLFLISG. Residues 2168–2169 lie on the Lumenal side of the membrane; that stretch reads KG. The helical intramembrane region spans 2170-2190; that stretch reads IGKTSIGLICVIASSGMLWMA. Glutamate 2191 is a topological domain (lumenal). A helical transmembrane segment spans residues 2192–2212; it reads VPLQWIASAIVLEFFMMVLLI. Topologically, residues 2213 to 2227 are cytoplasmic; it reads PEPEKQRTPQDNQLA. The chain crosses the membrane as a helical span at residues 2228-2248; the sequence is YVVIGILTLAATIAANEMGLL. At 2249 to 2273 the chain is on the lumenal side; it reads ETTKRDLGMSKEPGVVSPTSYLDVD. The segment at residues 2274–2294 is an intramembrane region (helical); sequence LHPASAWTLYAVATTVITPML. At 2295-2305 the chain is on the lumenal side; the sequence is RHTIENSTANV. N-linked (GlcNAc...) asparagine; by host glycosylation is found at asparagine 2300 and asparagine 2304. An intramembrane region (helical) is located at residues 2306-2326; that stretch reads SLAAIANQAVVLMGLDKGWPI. Over 2327–2346 the chain is Lumenal; that stretch reads SKMDLGVPLLALGCYSQVNP. The helical transmembrane segment at 2347 to 2367 threads the bilayer; the sequence is LTLTAAVLLLITHYAIIGPGL. The Cytoplasmic segment spans residues 2368-2412; sequence QAKATREAQKRTAAGIMKNPTVDGIMTIDLDSVIFDSKFEKQLGQ. Residues 2413–2433 traverse the membrane as a helical segment; the sequence is VMLLVLCAVQLLLMRTSWALC. Topologically, residues 2434-2458 are lumenal; the sequence is EALTLATGPITTLWEGSPGKFWNTT. Asparagine 2456 carries N-linked (GlcNAc...) asparagine; by host glycosylation. A helical transmembrane segment spans residues 2459–2479; it reads IAVSMANIFRGSYLAGAGLAF. Topologically, residues 2480–3390 are cytoplasmic; it reads SIMKSVGTGK…KEEESEGAIW (911 aa). One can recognise an mRNA cap 0-1 NS5-type MT domain in the interval 2492–2753; sequence TGSQGETLGE…DVDLGAGTRH (262 aa). Serine 2546 provides a ligand contact to S-adenosyl-L-methionine. A Phosphoserine modification is found at serine 2546. The active-site For 2'-O-MTase activity is lysine 2551. The SUMO-interacting motif motif lies at 2567–2570; that stretch reads VIDL. 6 residues coordinate S-adenosyl-L-methionine: glycine 2576, tryptophan 2577, threonine 2594, lysine 2595, aspartate 2621, and valine 2622. Catalysis depends on aspartate 2636, which acts as the For 2'-O-MTase activity. Isoleucine 2637 serves as a coordination point for S-adenosyl-L-methionine. Residues lysine 2670 and glutamate 2706 each act as for 2'-O-MTase activity in the active site. Tyrosine 2708 is an S-adenosyl-L-methionine binding site. 4 residues coordinate Zn(2+): glutamate 2927, histidine 2931, cysteine 2936, and cysteine 2939. The region spanning 3018-3168 is the RdRp catalytic domain; the sequence is AMYADDTAGW…PIDDRFANAL (151 aa). Zn(2+) contacts are provided by histidine 3202, cysteine 3218, and cysteine 3337.

The protein in the N-terminal section; belongs to the class I-like SAM-binding methyltransferase superfamily. mRNA cap 0-1 NS5-type methyltransferase family. Homodimer. Interacts (via N-terminus) with host EXOC1 (via C-terminus); this interaction results in EXOC1 degradation through the proteasome degradation pathway. In terms of assembly, forms heterodimers with envelope protein E in the endoplasmic reticulum and Golgi. As to quaternary structure, homodimer; in the endoplasmic reticulum and Golgi. Interacts with protein prM. Interacts with non-structural protein 1. Homodimer; Homohexamer when secreted. Interacts with envelope protein E. In terms of assembly, interacts (via N-terminus) with serine protease NS3. As to quaternary structure, forms a heterodimer with serine protease NS3. May form homooligomers. Forms a heterodimer with NS2B. Interacts with NS4B. Interacts with unphosphorylated RNA-directed RNA polymerase NS5; this interaction stimulates RNA-directed RNA polymerase NS5 guanylyltransferase activity. Interacts with host SHFL. In terms of assembly, interacts with host MAVS; this interaction inhibits the synthesis of IFN-beta. Interacts with host SHFL. Interacts with host AUP1; the interaction occurs in the presence of Dengue virus NS4B and induces lipophagy which facilitates production of virus progeny particles. As to quaternary structure, interacts with serine protease NS3. Homodimer. Interacts with host STAT2; this interaction inhibits the phosphorylation of the latter, and, when all viral proteins are present (polyprotein), targets STAT2 for degradation. Interacts with serine protease NS3. Post-translationally, specific enzymatic cleavages in vivo yield mature proteins. Cleavages in the lumen of endoplasmic reticulum are performed by host signal peptidase, whereas cleavages in the cytoplasmic side are performed by serine protease NS3. Signal cleavage at the 2K-4B site requires a prior NS3 protease-mediated cleavage at the 4A-2K site. Cleaved in post-Golgi vesicles by a host furin, releasing the mature small envelope protein M, and peptide pr. This cleavage is incomplete as up to 30% of viral particles still carry uncleaved prM. In terms of processing, N-glycosylated. Post-translationally, N-glycosylated. The excreted form is glycosylated and this is required for efficient secretion of the protein from infected cells. Acetylated by host KAT5. Acetylation modulates NS3 RNA-binding and unwinding activities and plays an important positive role for viral replication. In terms of processing, sumoylation of RNA-directed RNA polymerase NS5 increases NS5 protein stability allowing proper viral RNA replication. Post-translationally, phosphorylated on serines residues. This phosphorylation may trigger NS5 nuclear localization.

It localises to the virion. Its subcellular location is the host nucleus. The protein localises to the host cytoplasm. It is found in the host perinuclear region. The protein resides in the secreted. It localises to the virion membrane. Its subcellular location is the host endoplasmic reticulum membrane. The protein localises to the host mitochondrion. The catalysed reaction is Selective hydrolysis of -Xaa-Xaa-|-Yaa- bonds in which each of the Xaa can be either Arg or Lys and Yaa can be either Ser or Ala.. The enzyme catalyses RNA(n) + a ribonucleoside 5'-triphosphate = RNA(n+1) + diphosphate. It catalyses the reaction a ribonucleoside 5'-triphosphate + H2O = a ribonucleoside 5'-diphosphate + phosphate + H(+). It carries out the reaction ATP + H2O = ADP + phosphate + H(+). The catalysed reaction is a 5'-end (5'-triphosphoguanosine)-ribonucleoside in mRNA + S-adenosyl-L-methionine = a 5'-end (N(7)-methyl 5'-triphosphoguanosine)-ribonucleoside in mRNA + S-adenosyl-L-homocysteine. The enzyme catalyses a 5'-end (N(7)-methyl 5'-triphosphoguanosine)-ribonucleoside in mRNA + S-adenosyl-L-methionine = a 5'-end (N(7)-methyl 5'-triphosphoguanosine)-(2'-O-methyl-ribonucleoside) in mRNA + S-adenosyl-L-homocysteine + H(+). In terms of biological role, plays a role in virus budding by binding to the cell membrane and gathering the viral RNA into a nucleocapsid that forms the core of a mature virus particle. During virus entry, may induce genome penetration into the host cytoplasm after hemifusion induced by the surface proteins. Can migrate to the cell nucleus where it modulates host functions. Overcomes the anti-viral effects of host EXOC1 by sequestering and degrading the latter through the proteasome degradation pathway. Functionally, inhibits RNA silencing by interfering with host Dicer. Its function is as follows. Prevents premature fusion activity of envelope proteins in trans-Golgi by binding to envelope protein E at pH6.0. After virion release in extracellular space, gets dissociated from E dimers. Acts as a chaperone for envelope protein E during intracellular virion assembly by masking and inactivating envelope protein E fusion peptide. prM is the only viral peptide matured by host furin in the trans-Golgi network probably to avoid catastrophic activation of the viral fusion activity in acidic Golgi compartment prior to virion release. prM-E cleavage is inefficient, and many virions are only partially matured. These uncleaved prM would play a role in immune evasion. In terms of biological role, may play a role in virus budding. Exerts cytotoxic effects by activating a mitochondrial apoptotic pathway through M ectodomain. May display a viroporin activity. Functionally, binds to host cell surface receptor and mediates fusion between viral and cellular membranes. Envelope protein is synthesized in the endoplasmic reticulum in the form of heterodimer with protein prM. They play a role in virion budding in the ER, and the newly formed immature particle is covered with 60 spikes composed of heterodimer between precursor prM and envelope protein E. The virion is transported to the Golgi apparatus where the low pH causes dissociation of PrM-E heterodimers and formation of E homodimers. prM-E cleavage is inefficient, and many virions are only partially matured. These uncleaved prM would play a role in immune evasion. Its function is as follows. Involved in immune evasion, pathogenesis and viral replication. Once cleaved off the polyprotein, is targeted to three destinations: the viral replication cycle, the plasma membrane and the extracellular compartment. Essential for viral replication. Required for formation of the replication complex and recruitment of other non-structural proteins to the ER-derived membrane structures. Excreted as a hexameric lipoparticle that plays a role against host immune response. Antagonizing the complement function. Binds to the host macrophages and dendritic cells. Inhibits signal transduction originating from Toll-like receptor 3 (TLR3). Disrupts the host endothelial glycocalyx layer of host pulmonary microvascular endothelial cells, inducing degradation of sialic acid and shedding of heparan sulfate proteoglycans. NS1 induces expression of sialidases, heparanase, and activates cathepsin L, which activates heparanase via enzymatic cleavage. These effects are probably linked to the endothelial hyperpermeability observed in severe dengue disease. In terms of biological role, component of the viral RNA replication complex that functions in virion assembly and antagonizes the host immune response. Functionally, required cofactor for the serine protease function of NS3. May have membrane-destabilizing activity and form viroporins. Its function is as follows. Displays three enzymatic activities: serine protease, NTPase and RNA helicase. NS3 serine protease, in association with NS2B, performs its autocleavage and cleaves the polyprotein at dibasic sites in the cytoplasm: C-prM, NS2A-NS2B, NS2B-NS3, NS3-NS4A, NS4A-2K and NS4B-NS5. NS3 RNA helicase binds RNA and unwinds dsRNA in the 3' to 5' direction. Regulates the ATPase activity of the NS3 helicase activity. NS4A allows NS3 helicase to conserve energy during unwinding. Plays a role in the inhibition of the host innate immune response. Interacts with host MAVS and thereby prevents the interaction between RIGI and MAVS. In turn, IFN-beta production is impaired. Interacts with host AUP1 which mediates induction of lipophagy in host cells and facilitates production of virus progeny particles. In terms of biological role, functions as a signal peptide for NS4B and is required for the interferon antagonism activity of the latter. Functionally, induces the formation of ER-derived membrane vesicles where the viral replication takes place. Inhibits interferon (IFN)-induced host STAT1 phosphorylation and nuclear translocation, thereby preventing the establishment of cellular antiviral state by blocking the IFN-alpha/beta pathway. Its function is as follows. Replicates the viral (+) and (-) RNA genome, and performs the capping of genomes in the cytoplasm. NS5 methylates viral RNA cap at guanine N-7 and ribose 2'-O positions. Besides its role in RNA genome replication, also prevents the establishment of cellular antiviral state by blocking the interferon-alpha/beta (IFN-alpha/beta) signaling pathway. Inhibits host TYK2 and STAT2 phosphorylation, thereby preventing activation of JAK-STAT signaling pathway. The chain is Genome polyprotein (pol) from Dengue virus type 3 (strain Sri Lanka/1266/2000) (DENV-3).